Here is a 434-residue protein sequence, read N- to C-terminus: Ribosomal protein uS12 methylthiotransferase RimO (434 aa).

One can recognise an MTTase N-terminal domain in the interval 2 to 112 (AKIGFVSLGC…VLEAVQEVLP (111 aa)). The [4Fe-4S] cluster site is built by Cys11, Cys47, Cys76, Cys142, Cys146, and Cys149. The Radical SAM core domain occupies 128–365 (LTPRHYAYVK…LEVQARVSLR (238 aa)). The TRAM domain occupies 368–434 (QRFVGKTLEV…DTYDLHGVQA (67 aa)).

Belongs to the methylthiotransferase family. RimO subfamily. Requires [4Fe-4S] cluster as cofactor.

It is found in the cytoplasm. The enzyme catalyses L-aspartate(89)-[ribosomal protein uS12]-hydrogen + (sulfur carrier)-SH + AH2 + 2 S-adenosyl-L-methionine = 3-methylsulfanyl-L-aspartate(89)-[ribosomal protein uS12]-hydrogen + (sulfur carrier)-H + 5'-deoxyadenosine + L-methionine + A + S-adenosyl-L-homocysteine + 2 H(+). Its function is as follows. Catalyzes the methylthiolation of an aspartic acid residue of ribosomal protein uS12. This Thermus thermophilus (strain ATCC BAA-163 / DSM 7039 / HB27) protein is Ribosomal protein uS12 methylthiotransferase RimO.